Here is a 328-residue protein sequence, read N- to C-terminus: Tetraacyldisaccharide 4'-kinase (328 aa).

55–62 (TAGGNGKT) serves as a coordination point for ATP.

Belongs to the LpxK family.

The catalysed reaction is a lipid A disaccharide + ATP = a lipid IVA + ADP + H(+). Its pathway is glycolipid biosynthesis; lipid IV(A) biosynthesis; lipid IV(A) from (3R)-3-hydroxytetradecanoyl-[acyl-carrier-protein] and UDP-N-acetyl-alpha-D-glucosamine: step 6/6. Its function is as follows. Transfers the gamma-phosphate of ATP to the 4'-position of a tetraacyldisaccharide 1-phosphate intermediate (termed DS-1-P) to form tetraacyldisaccharide 1,4'-bis-phosphate (lipid IVA). In Escherichia coli (strain 55989 / EAEC), this protein is Tetraacyldisaccharide 4'-kinase.